A 351-amino-acid polypeptide reads, in one-letter code: Dihydroorotate dehydrogenase (quinone) (351 aa).

Residues A67 to K71 and T91 contribute to the FMN site. K71 serves as a coordination point for substrate. N116 to F120 provides a ligand contact to substrate. N145 and N178 together coordinate FMN. Substrate is bound at residue N178. The Nucleophile role is filled by S181. A substrate-binding site is contributed by N183. Residues K214 and T242 each coordinate FMN. A substrate-binding site is contributed by N243–T244. FMN contacts are provided by residues G262, G291, and Y312–S313.

This sequence belongs to the dihydroorotate dehydrogenase family. Type 2 subfamily. Monomer. FMN serves as cofactor.

It is found in the cell membrane. It catalyses the reaction (S)-dihydroorotate + a quinone = orotate + a quinol. It functions in the pathway pyrimidine metabolism; UMP biosynthesis via de novo pathway; orotate from (S)-dihydroorotate (quinone route): step 1/1. In terms of biological role, catalyzes the conversion of dihydroorotate to orotate with quinone as electron acceptor. In Helicobacter pylori (strain J99 / ATCC 700824) (Campylobacter pylori J99), this protein is Dihydroorotate dehydrogenase (quinone) (pyrD).